Consider the following 144-residue polypeptide: uncharacterized protein (144 aa).

Residues 50–140 (NQDKAIVVDT…YWKTDNLPLI (91 aa)) form the Rhodanese domain.

This is an uncharacterized protein from Buchnera aphidicola subsp. Acyrthosiphon pisum (strain APS) (Acyrthosiphon pisum symbiotic bacterium).